We begin with the raw amino-acid sequence, 613 residues long: Leucine-rich repeat and immunoglobulin-like domain-containing nogo receptor-interacting protein 1 (613 aa).

The N-terminal stretch at 1–34 is a signal peptide; the sequence is MLAGEASMRSPILACWQPILLLMLGSILSGSATG. 2 disulfides stabilise this stretch: Cys35–Cys41 and Cys39–Cys50. An LRRNT domain is found at 35–64; sequence CPPRCECSAQERAVLCHRKRFMVVPEGIPT. Over 35–554 the chain is Extracellular; that stretch reads CPPRCECSAQ…FDIKTLIIAT (520 aa). LRR repeat units follow at residues 65-86, 89-110, 113-134, 137-158, 161-182, 185-206, 209-230, 257-278, 281-302, 305-326, and 329-350; these read ETRQ…EFAN, HLEE…AFNN, NLRT…VFTG, NLTK…MFQD, NLKS…AFSG, SLEQ…ALSH, GLIV…SFKR, NLTS…SVRH, YLRF…MLHD, RLQE…AFRG, and YLRI…AFHS. An N-linked (GlcNAc...) asparagine glycan is attached at Asn137. Asn195 carries N-linked (GlcNAc...) asparagine glycosylation. Asn257, Asn267, and Asn286 each carry an N-linked (GlcNAc...) asparagine glycan. The N-linked (GlcNAc...) asparagine glycan is linked to Asn334. The LRRCT domain occupies 362–416; the sequence is NPLACDCRLLWVFRRRWRLNFNKQQPTCSTPEFVQGKEFKDFPDVLLPNYFTCRR. 3 disulfide bridges follow: Cys366-Cys389, Cys368-Cys414, and Cys439-Cys490. One can recognise an Ig-like C2-type domain in the interval 404 to 508; that stretch reads PDVLLPNYFT…DTMLAHLHVR (105 aa). N-linked (GlcNAc...) asparagine glycans are attached at residues Asn485, Asn498, Asn519, Asn530, and Asn535. Residues 555-575 traverse the membrane as a helical segment; that stretch reads TMGFISFLGVVLFCLVLLFLW. The Cytoplasmic segment spans residues 576-613; that stretch reads SRGKGNTKHNIEIEYVPRKSDAGISSADAPRKFNMKMI.

Homotetramer. Forms ternary complex with RTN4R/NGFR and RTN4R/TNFRSF19. Post-translationally, N-glycosylated. Contains predominantly high-mannose glycans.

Its subcellular location is the cell membrane. Functionally, functional component of the Nogo receptor signaling complex (RTN4R/NGFR) in RhoA activation responsible for some inhibition of axonal regeneration by myelin-associated factors. Is also an important negative regulator of oligodentrocyte differentiation and axonal myelination. The sequence is that of Leucine-rich repeat and immunoglobulin-like domain-containing nogo receptor-interacting protein 1 (LINGO1) from Gallus gallus (Chicken).